The primary structure comprises 673 residues: MAARGGGAGGAGSGSGPSAGTAGEAAEPALRPGEVAALHPQEVAARLQRMRRELSNRRKILVKNLPQDSSSQEVHELLQDYELKYCYVDRNKRTAFVTLLNGEQAQSAIQRFHQFSFRGRELTVQLQPTDALLCITNLPISFTLEEFEELVRAYGNIERCFLVYSEVTGHSKGYGFVEYMKKDFAAKARLELLGRQMGASALFAQWMDVNLLASELIHSKCLCIDKLPSDYSDSEELLQLFSGIHKPVFCQLAQDEGSHGGGFAVVEYSTAEHAEEVQQVADGITIKGSQVQLSFCAPGAPGRSTLAVLIAAQRAMHSNQKGLLPEPNPVQIMKSLNNPAMLQVLLQPQLCGRAMKPVLGVAPSLSHLLSPSLPSAILHFSKAQQSSAVGNTSSLILQNLSPLPLIQQQLMKFDNAHTNNKPGLLGEPPAMVLQPALAIGPPLPLKTDLGHHGEAHKTSNLIPPQTTLAAGLGMLPFFSNQLPAGQAGPGRGTTQEKQSASVSISEASFSGSQHYLQTFPGLPAGGPLTGNQKTPQSQPKGTEVASKNQTSLLGEPPKEIRLSKNPYLNLASVLPSVCLSTAGKGMPPKTGIASNILDAISQGSESQHALEKCIAYSPSIEDYAQASSLRNEKRGSSYLISAPEGGPVELAGQHPQDTGVSYTETYLKKKRVY.

The span at 1–17 shows a compositional bias: gly residues; the sequence is MAARGGGAGGAGSGSGP. The tract at residues 1-34 is disordered; the sequence is MAARGGGAGGAGSGSGPSAGTAGEAAEPALRPGE. A compositionally biased stretch (low complexity) spans 18-29; sequence SAGTAGEAAEPA. RRM domains lie at 58 to 129, 131 to 209, and 220 to 298; these read RKIL…LQPT, ALLC…WMDV, and KCLC…FCAP. Positions 481-549 are disordered; sequence QLPAGQAGPG…KGTEVASKNQ (69 aa). Residues 499–512 are compositionally biased toward low complexity; the sequence is SASVSISEASFSGS. Polar residues predominate over residues 529–549; the sequence is TGNQKTPQSQPKGTEVASKNQ.

Interacts with PTBP1 and RAVER1. In terms of tissue distribution, expressed throughout embryogenesis. Detected at low levels in adult lung, brain and kidney, but not in the other tissues tested.

The protein localises to the nucleus. Its subcellular location is the cytoplasm. In terms of biological role, may bind single-stranded nucleic acids. This is Ribonucleoprotein PTB-binding 2 (Raver2) from Mus musculus (Mouse).